Reading from the N-terminus, the 130-residue chain is Nascent polypeptide-associated complex protein (130 aa).

Residues 6-74 (GMNPRKMQQM…PVERDAADAI (69 aa)) enclose the NAC-A/B domain. The interval 65 to 91 (PVERDAADAIEAAPADDSDDTDDDDAI) is disordered. Acidic residues predominate over residues 78-90 (PADDSDDTDDDDA).

The protein belongs to the NAC-alpha family. In terms of assembly, homodimer. Interacts with the ribosome. Binds ribosomal RNA.

Contacts the emerging nascent chain on the ribosome. This chain is Nascent polypeptide-associated complex protein, found in Halobacterium salinarum (strain ATCC 700922 / JCM 11081 / NRC-1) (Halobacterium halobium).